Here is a 292-residue protein sequence, read N- to C-terminus: NAD kinase (292 aa).

Aspartate 73 acts as the Proton acceptor in catalysis. Residues 73 to 74 (DG), 147 to 148 (NE), histidine 158, arginine 175, aspartate 177, 188 to 193 (TAYSLS), and glutamine 247 each bind NAD(+).

The protein belongs to the NAD kinase family. Requires a divalent metal cation as cofactor.

The protein localises to the cytoplasm. It carries out the reaction NAD(+) + ATP = ADP + NADP(+) + H(+). Involved in the regulation of the intracellular balance of NAD and NADP, and is a key enzyme in the biosynthesis of NADP. Catalyzes specifically the phosphorylation on 2'-hydroxyl of the adenosine moiety of NAD to yield NADP. In Escherichia coli O157:H7, this protein is NAD kinase.